The following is a 211-amino-acid chain: Uridine kinase (211 aa).

Residue 12–19 participates in ATP binding; the sequence is GGSGSGKT.

The protein belongs to the uridine kinase family.

The protein resides in the cytoplasm. The enzyme catalyses uridine + ATP = UMP + ADP + H(+). The catalysed reaction is cytidine + ATP = CMP + ADP + H(+). Its pathway is pyrimidine metabolism; CTP biosynthesis via salvage pathway; CTP from cytidine: step 1/3. The protein operates within pyrimidine metabolism; UMP biosynthesis via salvage pathway; UMP from uridine: step 1/1. The sequence is that of Uridine kinase from Geobacillus kaustophilus (strain HTA426).